Reading from the N-terminus, the 72-residue chain is Large ribosomal subunit protein uL29 (72 aa).

This sequence belongs to the universal ribosomal protein uL29 family.

The polypeptide is Large ribosomal subunit protein uL29 (Chlamydia trachomatis serovar L2 (strain ATCC VR-902B / DSM 19102 / 434/Bu)).